We begin with the raw amino-acid sequence, 73 residues long: UPF0154 protein BcerKBAB4_3367 (73 aa).

Residues 4–24 form a helical membrane-spanning segment; the sequence is WLGILVGVVALVAGVALGFFI.

The protein belongs to the UPF0154 family.

The protein resides in the cell membrane. This Bacillus mycoides (strain KBAB4) (Bacillus weihenstephanensis) protein is UPF0154 protein BcerKBAB4_3367.